The primary structure comprises 182 residues: uncharacterized protein (182 aa).

In terms of domain architecture, N-acetyltransferase spans Val55 to Leu182.

The protein belongs to the acetyltransferase family. Ycf52 subfamily.

The protein resides in the plastid. Its subcellular location is the chloroplast. This is an uncharacterized protein from Gracilaria tenuistipitata var. liui (Red alga).